The primary structure comprises 268 residues: Kynurenine formamidase (268 aa).

The HGGXW motif lies at 33-37 (HGGGW). The active-site Nucleophile is Ser-107. Residues Asp-219 and His-251 contribute to the active site.

Belongs to the kynurenine formamidase family. Homodimer.

It carries out the reaction N-formyl-L-kynurenine + H2O = L-kynurenine + formate + H(+). The protein operates within amino-acid degradation; L-tryptophan degradation via kynurenine pathway; L-kynurenine from L-tryptophan: step 2/2. Catalyzes the hydrolysis of N-formyl-L-kynurenine to L-kynurenine, the second step in the kynurenine pathway of tryptophan degradation. Kynurenine may be further oxidized to nicotinic acid, NAD(H) and NADP(H). Required for elimination of toxic metabolites. This Scheffersomyces stipitis (strain ATCC 58785 / CBS 6054 / NBRC 10063 / NRRL Y-11545) (Yeast) protein is Kynurenine formamidase.